Consider the following 302-residue polypeptide: Bifunctional protein FolD (302 aa).

NADP(+) is bound by residues 165-167 (GRS), Ser190, and Ile231.

This sequence belongs to the tetrahydrofolate dehydrogenase/cyclohydrolase family. Homodimer.

The enzyme catalyses (6R)-5,10-methylene-5,6,7,8-tetrahydrofolate + NADP(+) = (6R)-5,10-methenyltetrahydrofolate + NADPH. It carries out the reaction (6R)-5,10-methenyltetrahydrofolate + H2O = (6R)-10-formyltetrahydrofolate + H(+). It participates in one-carbon metabolism; tetrahydrofolate interconversion. Its function is as follows. Catalyzes the oxidation of 5,10-methylenetetrahydrofolate to 5,10-methenyltetrahydrofolate and then the hydrolysis of 5,10-methenyltetrahydrofolate to 10-formyltetrahydrofolate. In Prochlorococcus marinus (strain MIT 9303), this protein is Bifunctional protein FolD.